Reading from the N-terminus, the 454-residue chain is Chromosomal replication initiator protein DnaA (454 aa).

The tract at residues 1-81 (MNNSLWQQCA…PNVVLKVGEA (81 aa)) is domain I, interacts with DnaA modulators. A disordered region spans residues 79-110 (GEASPTQRDSGSPQRAAATRRKTPNFSSGNTD). Positions 81–117 (ASPTQRDSGSPQRAAATRRKTPNFSSGNTDVEVPFES) are domain II. The segment covering 82–91 (SPTQRDSGSP) has biased composition (polar residues). Residues 118–334 (NIHPEYTFDN…GALNRVVANV (217 aa)) form a domain III, AAA+ region region. Glycine 162, glycine 164, lysine 165, and threonine 166 together coordinate ATP. A domain IV, binds dsDNA region spans residues 335–454 (QLTGRPITID…YRNLIRTLSS (120 aa)).

Belongs to the DnaA family. Oligomerizes as a right-handed, spiral filament on DNA at oriC.

Its subcellular location is the cytoplasm. In terms of biological role, plays an essential role in the initiation and regulation of chromosomal replication. ATP-DnaA binds to the origin of replication (oriC) to initiate formation of the DNA replication initiation complex once per cell cycle. Binds the DnaA box (a 9 base pair repeat at the origin) and separates the double-stranded (ds)DNA. Forms a right-handed helical filament on oriC DNA; dsDNA binds to the exterior of the filament while single-stranded (ss)DNA is stabiized in the filament's interior. The ATP-DnaA-oriC complex binds and stabilizes one strand of the AT-rich DNA unwinding element (DUE), permitting loading of DNA polymerase. After initiation quickly degrades to an ADP-DnaA complex that is not apt for DNA replication. Binds acidic phospholipids. The sequence is that of Chromosomal replication initiator protein DnaA from Idiomarina loihiensis (strain ATCC BAA-735 / DSM 15497 / L2-TR).